The chain runs to 752 residues: DNA ligase (752 aa).

NAD(+)-binding positions include 48–52, 97–98, and glutamate 131; these read DADYD and SL. Lysine 133 functions as the N6-AMP-lysine intermediate in the catalytic mechanism. Residues arginine 154, glutamate 189, lysine 305, and lysine 329 each contribute to the NAD(+) site. Positions 434, 437, 452, and 458 each coordinate Zn(2+). Basic and acidic residues predominate over residues 599–615; that stretch reads ADEGRRASLQPQRDKAW. Residues 599–618 are disordered; it reads ADEGRRASLQPQRDKAWADT. A BRCT domain is found at 673–752; the sequence is ATQSAVAGLT…EQWLDRIGDA (80 aa).

The protein belongs to the NAD-dependent DNA ligase family. LigA subfamily. The cofactor is Mg(2+). Mn(2+) serves as cofactor.

The enzyme catalyses NAD(+) + (deoxyribonucleotide)n-3'-hydroxyl + 5'-phospho-(deoxyribonucleotide)m = (deoxyribonucleotide)n+m + AMP + beta-nicotinamide D-nucleotide.. DNA ligase that catalyzes the formation of phosphodiester linkages between 5'-phosphoryl and 3'-hydroxyl groups in double-stranded DNA using NAD as a coenzyme and as the energy source for the reaction. It is essential for DNA replication and repair of damaged DNA. In Jannaschia sp. (strain CCS1), this protein is DNA ligase.